Consider the following 202-residue polypeptide: Matrix protein (202 aa).

The PPXY motif motif lies at 35 to 38 (PPEY). The essential for glycoprotein binding stretch occupies residues 115–151 (KLRRTFIFQWADSRGPLEGEELEYSQEITWDDDTEFV).

Belongs to the lyssavirus matrix protein family. As to quaternary structure, homomultimer. Interacts with nucleoprotein and with the cytoplasmic domain of glycoprotein. Interacts with host ATP6V1A; this interaction plays an important role in virion uncoating after viral entry.

It localises to the virion membrane. The protein localises to the host endomembrane system. It is found in the host cytoplasm. Plays a major role in assembly, budding and uncoating of virion after membrane fusion. Completely covers the ribonucleoprotein coil and keep it in condensed bullet-shaped form. Inhibits viral transcription and stimulates replication. Plays a major role in early induction of TRAIL-mediated apoptosis in infected neurons. Inhibits the integrated stress response (ISR) in the infected cell by blocking the formation of stress granules. This is Matrix protein (M) from Rabies virus (strain ERA) (RABV).